The primary structure comprises 165 residues: Neurotrophin-3 (165 aa).

The first 3 residues, 1–3 (IQS), serve as a signal peptide directing secretion. Residues 4–119 (TSMDQGSLSE…VLNQTSRRKR (116 aa)) constitute a propeptide that is removed on maturation. Residue Asn-112 is glycosylated (N-linked (GlcNAc...) asparagine).

The protein belongs to the NGF-beta family.

The protein resides in the secreted. In terms of biological role, seems to promote the survival of visceral and proprioceptive sensory neurons. In Aspidites melanocephalus (Black-headed python), this protein is Neurotrophin-3 (NTF3).